The chain runs to 311 residues: N-acetyl-gamma-glutamyl-phosphate reductase (311 aa).

Residue cysteine 117 is part of the active site.

The protein belongs to the NAGSA dehydrogenase family. Type 2 subfamily.

Its subcellular location is the cytoplasm. The catalysed reaction is N-acetyl-L-glutamate 5-semialdehyde + phosphate + NADP(+) = N-acetyl-L-glutamyl 5-phosphate + NADPH + H(+). Its pathway is amino-acid biosynthesis; L-arginine biosynthesis; N(2)-acetyl-L-ornithine from L-glutamate: step 3/4. Catalyzes the NADPH-dependent reduction of N-acetyl-5-glutamyl phosphate to yield N-acetyl-L-glutamate 5-semialdehyde. This is N-acetyl-gamma-glutamyl-phosphate reductase from Brucella anthropi (strain ATCC 49188 / DSM 6882 / CCUG 24695 / JCM 21032 / LMG 3331 / NBRC 15819 / NCTC 12168 / Alc 37) (Ochrobactrum anthropi).